Reading from the N-terminus, the 145-residue chain is Glycine-rich protein (145 aa).

The signal sequence occupies residues 1-19 (MKLTLAVVVVFAYIATTNA).

As to expression, component of the acid-insoluble and acid-soluble organic matrix of calcified layers of the shell (at protein level).

The protein localises to the secreted. The sequence is that of Glycine-rich protein from Lottia gigantea (Giant owl limpet).